Consider the following 55-residue polypeptide: Large ribosomal subunit protein bL33 (55 aa).

Belongs to the bacterial ribosomal protein bL33 family.

The polypeptide is Large ribosomal subunit protein bL33 (Hamiltonella defensa subsp. Acyrthosiphon pisum (strain 5AT)).